We begin with the raw amino-acid sequence, 140 residues long: Large ribosomal subunit protein uL11 (140 aa).

It belongs to the universal ribosomal protein uL11 family. Part of the ribosomal stalk of the 50S ribosomal subunit. Interacts with L10 and the large rRNA to form the base of the stalk. L10 forms an elongated spine to which L12 dimers bind in a sequential fashion forming a multimeric L10(L12)X complex. One or more lysine residues are methylated.

Forms part of the ribosomal stalk which helps the ribosome interact with GTP-bound translation factors. The chain is Large ribosomal subunit protein uL11 from Karelsulcia muelleri (strain GWSS) (Sulcia muelleri).